The chain runs to 208 residues: MNATTIIGIAGGSGSGKTSVTNEILHNLEGHSVALIAQDYYYKDQSHLTFEERLKTNYDHPFAFDNDLLIQNLMDLRNGIPVEVPTYDYVNHTRSAETIAFQPKDVIIVEGIFALENKTLRDLMDVKIYVDTDADLRILRRLMRDTKERGRSMESVIEQYLNVVRPMHNQFIEPTKRYADIIIPEGGSNKVAIDIMTTKIQSLINNQQ.

Residue 11–18 coordinates ATP; it reads GGSGSGKT.

The protein belongs to the uridine kinase family.

Its subcellular location is the cytoplasm. It catalyses the reaction uridine + ATP = UMP + ADP + H(+). The catalysed reaction is cytidine + ATP = CMP + ADP + H(+). The protein operates within pyrimidine metabolism; CTP biosynthesis via salvage pathway; CTP from cytidine: step 1/3. It participates in pyrimidine metabolism; UMP biosynthesis via salvage pathway; UMP from uridine: step 1/1. This chain is Uridine kinase, found in Staphylococcus carnosus (strain TM300).